Here is a 190-residue protein sequence, read N- to C-terminus: MNNNLPSEAVAHAVAVLKNEHVIAYPTEAVFGVGCDPDSETAVMRLLELKQRPVEKGLILIAASFEQLKPYIDDSRLSDSQREAIFSCWPGPVTFVFPARPETPRWLTGRFDSLAVRVTNHPLVIELCEAYGKPLVSTSANLTGQPPCRTTAEVHAQFGDSFPVVDGATGGRQNPSEIRDALTGELFRQG.

In terms of domain architecture, YrdC-like spans 7–190 (SEAVAHAVAV…ALTGELFRQG (184 aa)).

The protein belongs to the SUA5 family. TsaC subfamily.

The protein localises to the cytoplasm. It carries out the reaction L-threonine + hydrogencarbonate + ATP = L-threonylcarbamoyladenylate + diphosphate + H2O. Its function is as follows. Required for the formation of a threonylcarbamoyl group on adenosine at position 37 (t(6)A37) in tRNAs that read codons beginning with adenine. Catalyzes the conversion of L-threonine, HCO(3)(-)/CO(2) and ATP to give threonylcarbamoyl-AMP (TC-AMP) as the acyladenylate intermediate, with the release of diphosphate. In Klebsiella pneumoniae subsp. pneumoniae (strain ATCC 700721 / MGH 78578), this protein is Threonylcarbamoyl-AMP synthase.